Reading from the N-terminus, the 280-residue chain is Pantothenate synthetase (280 aa).

An ATP-binding site is contributed by 30 to 37; sequence MGYLHEGH. The Proton donor role is filled by histidine 37. Glutamine 61 contacts (R)-pantoate. Glutamine 61 contributes to the beta-alanine binding site. Residue 147–150 participates in ATP binding; that stretch reads GKKD. A (R)-pantoate-binding site is contributed by glutamine 153. Residues valine 176 and 184–187 contribute to the ATP site; that span reads MSSR.

It belongs to the pantothenate synthetase family. As to quaternary structure, homodimer.

The protein localises to the cytoplasm. The enzyme catalyses (R)-pantoate + beta-alanine + ATP = (R)-pantothenate + AMP + diphosphate + H(+). The protein operates within cofactor biosynthesis; (R)-pantothenate biosynthesis; (R)-pantothenate from (R)-pantoate and beta-alanine: step 1/1. Catalyzes the condensation of pantoate with beta-alanine in an ATP-dependent reaction via a pantoyl-adenylate intermediate. The sequence is that of Pantothenate synthetase from Sulfurihydrogenibium sp. (strain YO3AOP1).